The sequence spans 222 residues: N-(5'-phosphoribosyl)anthranilate isomerase (222 aa).

This sequence belongs to the TrpF family.

The catalysed reaction is N-(5-phospho-beta-D-ribosyl)anthranilate = 1-(2-carboxyphenylamino)-1-deoxy-D-ribulose 5-phosphate. It participates in amino-acid biosynthesis; L-tryptophan biosynthesis; L-tryptophan from chorismate: step 3/5. The protein is N-(5'-phosphoribosyl)anthranilate isomerase of Rhizobium etli (strain ATCC 51251 / DSM 11541 / JCM 21823 / NBRC 15573 / CFN 42).